A 351-amino-acid polypeptide reads, in one-letter code: Outer membrane protein A (351 aa).

The first 21 residues, Met1–Ala21, serve as a signal peptide directing secretion. Beta stranded transmembrane passes span Thr27–Ser37, Gln55–Val66, Val70–Trp78, Gln96–Pro107, Leu112–Gly120, Pro147–Ala156, Ile161–Gln168, and Leu187–Arg195. Repeat copies occupy residues Ala206–Pro207, Ala208–Pro209, Ala210–Pro211, and Ala212–Pro213. Positions Ala206–Pro213 are 4 X 2 AA tandem repeats of A-P. The OmpA-like domain occupies Val215–Lys343. A disulfide bridge links Cys316 with Cys328.

It belongs to the outer membrane OOP (TC 1.B.6) superfamily. OmpA family. As to quaternary structure, monomer and homodimer.

Its subcellular location is the cell outer membrane. Functionally, with TolR probably plays a role in maintaining the position of the peptidoglycan cell wall in the periplasm. Acts as a porin with low permeability that allows slow penetration of small solutes; an internal gate slows down solute passage. In terms of biological role, required for conjugation with F-type plasmids; probably serves as the mating receptor on recipient cells. This Escherichia fergusonii (strain ATCC 35469 / DSM 13698 / CCUG 18766 / IAM 14443 / JCM 21226 / LMG 7866 / NBRC 102419 / NCTC 12128 / CDC 0568-73) protein is Outer membrane protein A.